Here is a 117-residue protein sequence, read N- to C-terminus: Peptidyl-tRNA hydrolase (117 aa).

This sequence belongs to the PTH2 family.

It is found in the cytoplasm. The enzyme catalyses an N-acyl-L-alpha-aminoacyl-tRNA + H2O = an N-acyl-L-amino acid + a tRNA + H(+). Functionally, the natural substrate for this enzyme may be peptidyl-tRNAs which drop off the ribosome during protein synthesis. The chain is Peptidyl-tRNA hydrolase from Thermoplasma volcanium (strain ATCC 51530 / DSM 4299 / JCM 9571 / NBRC 15438 / GSS1).